The chain runs to 93 residues: Pyrimidine/purine nucleoside phosphorylase (93 aa).

It belongs to the nucleoside phosphorylase PpnP family.

It catalyses the reaction a purine D-ribonucleoside + phosphate = a purine nucleobase + alpha-D-ribose 1-phosphate. The catalysed reaction is adenosine + phosphate = alpha-D-ribose 1-phosphate + adenine. The enzyme catalyses cytidine + phosphate = cytosine + alpha-D-ribose 1-phosphate. It carries out the reaction guanosine + phosphate = alpha-D-ribose 1-phosphate + guanine. It catalyses the reaction inosine + phosphate = alpha-D-ribose 1-phosphate + hypoxanthine. The catalysed reaction is thymidine + phosphate = 2-deoxy-alpha-D-ribose 1-phosphate + thymine. The enzyme catalyses uridine + phosphate = alpha-D-ribose 1-phosphate + uracil. It carries out the reaction xanthosine + phosphate = alpha-D-ribose 1-phosphate + xanthine. In terms of biological role, catalyzes the phosphorolysis of diverse nucleosides, yielding D-ribose 1-phosphate and the respective free bases. Can use uridine, adenosine, guanosine, cytidine, thymidine, inosine and xanthosine as substrates. Also catalyzes the reverse reactions. The polypeptide is Pyrimidine/purine nucleoside phosphorylase (Shewanella halifaxensis (strain HAW-EB4)).